The primary structure comprises 287 residues: Survival motor neuron protein (287 aa).

The tract at residues 1–28 is disordered; sequence MGGGGGGFPEPEDSVLFRRGTGESDDSD. Positions 9 to 40 are P1 (binding site for GEMIN2); sequence PEPEDSVLFRRGTGESDDSDVWDDTALIKAYD. T21 carries the phosphothreonine modification. 2 positions are modified to phosphoserine: S24 and S27. K47 is covalently cross-linked (Glycyl lysine isopeptide (Lys-Gly) (interchain with G-Cter in SUMO2)). Disordered stretches follow at residues 51–86 and 149–221; these read KNGDISEASEKPKGTPKRKSAKNKSQRKNTTSPSKQ and NAQE…PPPH. Residues 64-77 show a composition bias toward basic residues; that stretch reads GTPKRKSAKNKSQR. T65 carries the phosphothreonine modification. T80 is modified (phosphothreonine; by PKA). The 61-residue stretch at 86–146 folds into the Tudor domain; it reads QWKVGDNCCA…LSPTSEVANI (61 aa). Residues 92–204 form a required for interaction with RPP20/POP7 region; that stretch reads NCCAIWSEDG…MPRSGLGPGK (113 aa). A compositionally biased stretch (low complexity) spans 149–160; it reads NAQENENESQIS. The span at 167 to 179 shows a compositional bias: polar residues; that stretch reads SSRSPLNKPNNIR. K204 is covalently cross-linked (Glycyl lysine isopeptide (Lys-Gly) (interchain with G-Cter in SUMO2)). Residues 211-221 are compositionally biased toward pro residues; sequence GPPPPPPPPPH. Residues 234 to 261 are P2 (binding site for SM B); it reads PPMIPPPPPICPDSLDDADALGSMLISW. The required for interaction with SYNCRIP stretch occupies residues 273 to 287; it reads GFKQSQKEGRYSHFN.

It belongs to the SMN family. As to quaternary structure, homooligomer; may form higher order homooligomers in the dimer to octamer range. Part of the core SMN complex that contains SMN1, GEMIN2/SIP1, DDX20/GEMIN3, GEMIN4, GEMIN5, GEMIN6, GEMIN7, GEMIN8 and STRAP/UNRIP. Part of the SMN-Sm complex that contains SMN1, GEMIN2/SIP1, DDX20/GEMIN3, GEMIN4, GEMIN5, GEMIN6, GEMIN7, GEMIN8, STRAP/UNRIP and the Sm proteins SNRPB, SNRPD1, SNRPD2, SNRPD3, SNRPE, SNRPF and SNRPG. Component of an import snRNP complex composed of KPNB1, RNUT1, SMN1 and ZNF259. Interacts with DDX20, FBL, NOLA1, RNUT1, SYNCRIP and with several spliceosomal snRNP core Sm proteins, including SNRPB, SNRPD1, SNRPD2, SNRPD3, SNRPE and ILF3. Interacts with GEMIN2; the interaction is direct. Interacts with GEMIN3; the interaction is direct. Interacts with GEMIN8; the interaction is direct. Interacts with SNRPB; the interaction is direct. Interacts (via Tudor domain) with SNRPD1 (via C-terminus); the interaction is direct. Interacts with SNRPD2; the interaction is direct. Interacts (via Tudor domain) with SNRPD3 (via C-terminus); the interaction is direct. Interacts with SNRPE; the interaction is direct. Interacts with OSTF1, LSM10, LSM11 and RPP20/POP7. Interacts (via C-terminal region) with ZPR1 (via C-terminal region). Interacts (via Tudor domain) with COIL. Interacts with SETX; recruits SETX to POLR2A. Interacts with POLR2A (via the C-terminal domain (CTD)). Interacts with PRMT5. Interacts with XRN2. Interacts (via C-terminus) with FMR1 (via C-terminus); the interaction is direct and occurs in a RNA-independent manner. Interacts (via Tudor domain) with SF3B2 ('Arg-508'-methylated form). Interacts with WRAP53/TCAB1. Interacts (via Tudor domain) with ELAVL4 in an RNA-independent manner; the interaction is required for localization of ELAVL4 to RNA granules. Interacts with FRG1.

It localises to the nucleus. It is found in the gem. Its subcellular location is the cajal body. The protein resides in the cytoplasm. The protein localises to the cytoplasmic granule. It localises to the perikaryon. It is found in the cell projection. Its subcellular location is the neuron projection. The protein resides in the axon. The protein localises to the myofibril. It localises to the sarcomere. It is found in the z line. In terms of biological role, the SMN complex catalyzes the assembly of small nuclear ribonucleoproteins (snRNPs), the building blocks of the spliceosome, and thereby plays an important role in the splicing of cellular pre-mRNAs. Most spliceosomal snRNPs contain a common set of Sm proteins SNRPB, SNRPD1, SNRPD2, SNRPD3, SNRPE, SNRPF and SNRPG that assemble in a heptameric protein ring on the Sm site of the small nuclear RNA to form the core snRNP (Sm core). In the cytosol, the Sm proteins SNRPD1, SNRPD2, SNRPE, SNRPF and SNRPG are trapped in an inactive 6S pICln-Sm complex by the chaperone CLNS1A that controls the assembly of the core snRNP. To assemble core snRNPs, the SMN complex accepts the trapped 5Sm proteins from CLNS1A forming an intermediate. Binding of snRNA inside 5Sm ultimately triggers eviction of the SMN complex, thereby allowing binding of SNRPD3 and SNRPB to complete assembly of the core snRNP. Within the SMN complex, SMN1 acts as a structural backbone and together with GEMIN2 it gathers the Sm complex subunits. Ensures the correct splicing of U12 intron-containing genes that may be important for normal motor and proprioceptive neurons development. Also required for resolving RNA-DNA hybrids created by RNA polymerase II, that form R-loop in transcription terminal regions, an important step in proper transcription termination. May also play a role in the metabolism of small nucleolar ribonucleoprotein (snoRNPs). This is Survival motor neuron protein (SMN1) from Bos taurus (Bovine).